A 178-amino-acid chain; its full sequence is Transcription antitermination protein NusB (178 aa).

Belongs to the NusB family.

Functionally, involved in transcription antitermination. Required for transcription of ribosomal RNA (rRNA) genes. Binds specifically to the boxA antiterminator sequence of the ribosomal RNA (rrn) operons. This chain is Transcription antitermination protein NusB, found in Alkalilimnicola ehrlichii (strain ATCC BAA-1101 / DSM 17681 / MLHE-1).